The primary structure comprises 1012 residues: F-box DNA helicase 1 (1012 aa).

A disordered region spans residues 1 to 54 (MHLTADDCEALSRSTEGLSSLTQPLNQRRSRGDVNRGLQPTHRTRTQPGAQGRQ). Residues 12–27 (SRSTEGLSSLTQPLNQ) are compositionally biased toward polar residues. An F-box domain is found at 185 to 234 (QGSIEDLPDEVLRSIFAFLPVTDLYQSLSLVCRRWRIIVGDPWFIPWKKL). The UvrD-like helicase ATP-binding domain occupies 427–692 (THEQQRILNH…YYLTQSFRFG (266 aa)). Residue 448–455 (AFAGTGKT) participates in ATP binding.

This sequence belongs to the helicase family. UvrD subfamily. Part of the SCF (SKP1-CUL1-F-box) E3 ubiquitin-protein ligase complex SCF(FBH1).

It is found in the nucleus. The protein localises to the chromosome. It carries out the reaction Couples ATP hydrolysis with the unwinding of duplex DNA by translocating in the 3'-5' direction.. The catalysed reaction is ATP + H2O = ADP + phosphate + H(+). It functions in the pathway protein modification; protein ubiquitination. Functionally, 3'-5' DNA helicase and substrate-recognition component of the SCF(FBH1) E3 ubiquitin ligase complex that plays a key role in response to stalled/damaged replication forks. Involved in genome maintenance by acting as an anti-recombinogenic helicase and preventing extensive strand exchange during homologous recombination: promotes RAD51 filament dissolution from stalled forks, thereby inhibiting homologous recombination and preventing excessive recombination. Also promotes cell death and DNA double-strand breakage in response to replication stress: promotes the endonucleolytic DNA cleavage following prolonged replication stress via its helicase activity, possibly to eliminate cells with excessive replication stress. This chain is F-box DNA helicase 1, found in Gallus gallus (Chicken).